Reading from the N-terminus, the 253-residue chain is Chitooligosaccharide deacetylase (253 aa).

2 residues coordinate Mg(2+): His-61 and His-125.

This sequence belongs to the YdjC deacetylase family. ChbG subfamily. Homodimer. Requires Mg(2+) as cofactor.

The protein resides in the cytoplasm. The enzyme catalyses N,N'-diacetylchitobiose + H2O = N-acetyl-beta-D-glucosaminyl-(1-&gt;4)-D-glucosamine + acetate. It catalyses the reaction diacetylchitobiose-6'-phosphate + H2O = N'-monoacetylchitobiose-6'-phosphate + acetate. It participates in glycan degradation; chitin degradation. In terms of biological role, involved in the degradation of chitin. ChbG is essential for growth on the acetylated chitooligosaccharides chitobiose and chitotriose but is dispensable for growth on cellobiose and chitosan dimer, the deacetylated form of chitobiose. Deacetylation of chitobiose-6-P and chitotriose-6-P is necessary for both the activation of the chb promoter by the regulatory protein ChbR and the hydrolysis of phosphorylated beta-glucosides by the phospho-beta-glucosidase ChbF. Catalyzes the removal of only one acetyl group from chitobiose-6-P to yield monoacetylchitobiose-6-P, the inducer of ChbR and the substrate of ChbF. The protein is Chitooligosaccharide deacetylase of Proteus mirabilis (strain HI4320).